Consider the following 291-residue polypeptide: Pyridoxal 5'-phosphate synthase subunit PdxS (291 aa).

Asp23 is a binding site for D-ribose 5-phosphate. Lys80 (schiff-base intermediate with D-ribose 5-phosphate) is an active-site residue. Gly152 contacts D-ribose 5-phosphate. A D-glyceraldehyde 3-phosphate-binding site is contributed by Arg164. Residues Gly213 and 234–235 (GS) each bind D-ribose 5-phosphate.

This sequence belongs to the PdxS/SNZ family. In the presence of PdxT, forms a dodecamer of heterodimers.

It carries out the reaction aldehydo-D-ribose 5-phosphate + D-glyceraldehyde 3-phosphate + L-glutamine = pyridoxal 5'-phosphate + L-glutamate + phosphate + 3 H2O + H(+). It functions in the pathway cofactor biosynthesis; pyridoxal 5'-phosphate biosynthesis. In terms of biological role, catalyzes the formation of pyridoxal 5'-phosphate from ribose 5-phosphate (RBP), glyceraldehyde 3-phosphate (G3P) and ammonia. The ammonia is provided by the PdxT subunit. Can also use ribulose 5-phosphate and dihydroxyacetone phosphate as substrates, resulting from enzyme-catalyzed isomerization of RBP and G3P, respectively. This chain is Pyridoxal 5'-phosphate synthase subunit PdxS, found in Streptococcus pneumoniae (strain P1031).